The chain runs to 479 residues: Mitochondria-eating protein (479 aa).

Coiled-coil stretches lie at residues 109 to 161 and 187 to 223; these read ERKL…LATT and LRRL…RIAR. 2 disordered regions span residues 220 to 251 and 456 to 479; these read RIAR…GRAR and RSRS…SRSR. Residues 235–249 show a composition bias toward low complexity; sequence RSPSPLPLRSCSPGR.

This sequence belongs to the MIEAP family.

It localises to the cytoplasm. Its subcellular location is the cytosol. The protein resides in the mitochondrion outer membrane. The protein localises to the mitochondrion matrix. In terms of biological role, key regulator of mitochondrial quality that mediates the repairing or degradation of unhealthy mitochondria in response to mitochondrial damage. Mediator of mitochondrial protein catabolic process (also named MALM) by mediating the degradation of damaged proteins inside mitochondria by promoting the accumulation in the mitochondrial matrix of hydrolases that are characteristic of the lysosomal lumen. Also involved in mitochondrion degradation of damaged mitochondria by promoting the formation of vacuole-like structures (named MIV), which engulf and degrade unhealthy mitochondria by accumulating lysosomes. Binds cardiolipin. May form molecular condensates (non-membrane-bounded organelles) within mitochondria that compartmentalize and promote cardiolipin metabolism. This chain is Mitochondria-eating protein (SPATA18), found in Gallus gallus (Chicken).